Consider the following 162-residue polypeptide: CASP-like protein 1C2 (162 aa).

At M1–R6 the chain is on the cytoplasmic side. The chain crosses the membrane as a helical span at residues L7–M27. Residues A28–P49 lie on the Extracellular side of the membrane. Residues A50 to F70 form a helical membrane-spanning segment. The Cytoplasmic segment spans residues H71–R79. The chain crosses the membrane as a helical span at residues L80–L100. At A101 to T130 the chain is on the extracellular side. The helical transmembrane segment at G131–I151 threads the bilayer. Topologically, residues Y152–A162 are cytoplasmic.

It belongs to the Casparian strip membrane proteins (CASP) family. As to quaternary structure, homodimer and heterodimers.

Its subcellular location is the cell membrane. This Populus trichocarpa (Western balsam poplar) protein is CASP-like protein 1C2.